The primary structure comprises 81 residues: MKTLLLTLVVVTIVCLDLGYTLKCNKLVPLFYKTCPAGKNLCYKMFMVAMPKVPVKRGCIDVCPKSSLLVKYVCCNTDRCN.

The N-terminal stretch at 1 to 21 (MKTLLLTLVVVTIVCLDLGYT) is a signal peptide. Intrachain disulfides connect cysteine 24–cysteine 42, cysteine 35–cysteine 59, cysteine 63–cysteine 74, and cysteine 75–cysteine 80.

This sequence belongs to the three-finger toxin family. Short-chain subfamily. Type IA cytotoxin sub-subfamily. Monomer in solution; Homodimer and oligomer in the presence of negatively charged lipids forming a pore with a size ranging between 20 and 30 Angstroms. In terms of tissue distribution, expressed by the venom gland.

The protein resides in the secreted. It localises to the target cell membrane. Functionally, shows cytolytic activity on many different cells by forming pore in lipid membranes. In vivo, increases heart rate or kills the animal by cardiac arrest. In addition, it binds to heparin with high affinity, interacts with Kv channel-interacting protein 1 (KCNIP1) in a calcium-independent manner, and binds to integrin alpha-V/beta-3 (ITGAV/ITGB3) with moderate affinity. This chain is Cytotoxin 4a, found in Naja sputatrix (Malayan spitting cobra).